The following is a 387-amino-acid chain: 3-ketoacyl-CoA thiolase (387 aa).

Cys91 serves as the catalytic Acyl-thioester intermediate. Active-site proton acceptor residues include His343 and Cys373.

Belongs to the thiolase-like superfamily. Thiolase family. In terms of assembly, heterotetramer of two alpha chains (FadB) and two beta chains (FadA).

The protein localises to the cytoplasm. It catalyses the reaction an acyl-CoA + acetyl-CoA = a 3-oxoacyl-CoA + CoA. The protein operates within lipid metabolism; fatty acid beta-oxidation. Catalyzes the final step of fatty acid oxidation in which acetyl-CoA is released and the CoA ester of a fatty acid two carbons shorter is formed. In Shewanella denitrificans (strain OS217 / ATCC BAA-1090 / DSM 15013), this protein is 3-ketoacyl-CoA thiolase.